A 95-amino-acid chain; its full sequence is Small ribosomal subunit protein bS6 (95 aa).

The protein belongs to the bacterial ribosomal protein bS6 family.

In terms of biological role, binds together with bS18 to 16S ribosomal RNA. The sequence is that of Small ribosomal subunit protein bS6 from Exiguobacterium sibiricum (strain DSM 17290 / CCUG 55495 / CIP 109462 / JCM 13490 / 255-15).